A 150-amino-acid polypeptide reads, in one-letter code: MGRCGTHTQINFLAGFVVRFNNVKTCLAQFWVNMGQNKEGNADKSSYFKVVSVILTLRGYVQLGYMVIHLVTHTLHCITLYITITHYTIYIVNIVIQLWLYRYIERFFYSLLVEYCENLCDSKEKRKVVIRFYFHFYFFFSFLFFIEKKK.

The next 3 helical transmembrane spans lie at 50-70 (VVSV…VIHL), 80-100 (LYIT…QLWL), and 127-147 (KVVI…FFIE).

The protein resides in the membrane. This is an uncharacterized protein from Schizosaccharomyces pombe (strain 972 / ATCC 24843) (Fission yeast).